Here is a 219-residue protein sequence, read N- to C-terminus: Pollen-specific protein SF3 (219 aa).

2 LIM zinc-binding domains span residues 9–109 (QKCT…TRDK) and 110–167 (CNAC…QLFK). The interval 181 to 219 (VAAPAESETQNTETQNAETQNADTQNADTQNTETQNGSV) is disordered. Residues 185 to 202 (AESETQNTETQNAETQNA) are compositionally biased toward low complexity. Residues 203 to 219 (DTQNADTQNTETQNGSV) show a composition bias toward polar residues.

Pollen.

Could possibly involved in controlling pollen-specific processes such as male gamete maturation, pollen tube formation, or even fertilization. In Helianthus annuus (Common sunflower), this protein is Pollen-specific protein SF3 (SF3).